Consider the following 476-residue polypeptide: Bifunctional protein HldE (476 aa).

Residues 1-319 (MKPTLPNYDQ…EAIHGSQDSG (319 aa)) are ribokinase. 195–198 (NMLE) contributes to the ATP binding site. Asp264 is an active-site residue. Positions 344–476 (MTNGCFDILH…IIEAIKGGRG (133 aa)) are cytidylyltransferase.

It in the N-terminal section; belongs to the carbohydrate kinase PfkB family. This sequence in the C-terminal section; belongs to the cytidylyltransferase family. As to quaternary structure, homodimer.

It carries out the reaction D-glycero-beta-D-manno-heptose 7-phosphate + ATP = D-glycero-beta-D-manno-heptose 1,7-bisphosphate + ADP + H(+). The enzyme catalyses D-glycero-beta-D-manno-heptose 1-phosphate + ATP + H(+) = ADP-D-glycero-beta-D-manno-heptose + diphosphate. The protein operates within nucleotide-sugar biosynthesis; ADP-L-glycero-beta-D-manno-heptose biosynthesis; ADP-L-glycero-beta-D-manno-heptose from D-glycero-beta-D-manno-heptose 7-phosphate: step 1/4. It participates in nucleotide-sugar biosynthesis; ADP-L-glycero-beta-D-manno-heptose biosynthesis; ADP-L-glycero-beta-D-manno-heptose from D-glycero-beta-D-manno-heptose 7-phosphate: step 3/4. Catalyzes the phosphorylation of D-glycero-D-manno-heptose 7-phosphate at the C-1 position to selectively form D-glycero-beta-D-manno-heptose-1,7-bisphosphate. Functionally, catalyzes the ADP transfer from ATP to D-glycero-beta-D-manno-heptose 1-phosphate, yielding ADP-D-glycero-beta-D-manno-heptose. This Aliivibrio fischeri (strain ATCC 700601 / ES114) (Vibrio fischeri) protein is Bifunctional protein HldE.